The sequence spans 119 residues: NADH-quinone oxidoreductase subunit A (119 aa).

The next 3 helical transmembrane spans lie at 9–29, 63–83, and 88–108; these read VLLFILVGIGVGVVPLLLGYV, LVAILFILFDLEIAFLFPWAV, and VGVTGFVAVLVFLAILVVGFA.

It belongs to the complex I subunit 3 family. In terms of assembly, NDH-1 is composed of 14 different subunits. Subunits NuoA, H, J, K, L, M, N constitute the membrane sector of the complex.

The protein localises to the cell inner membrane. It carries out the reaction a quinone + NADH + 5 H(+)(in) = a quinol + NAD(+) + 4 H(+)(out). In terms of biological role, NDH-1 shuttles electrons from NADH, via FMN and iron-sulfur (Fe-S) centers, to quinones in the respiratory chain. The immediate electron acceptor for the enzyme in this species is believed to be ubiquinone. Couples the redox reaction to proton translocation (for every two electrons transferred, four hydrogen ions are translocated across the cytoplasmic membrane), and thus conserves the redox energy in a proton gradient. This chain is NADH-quinone oxidoreductase subunit A, found in Acidovorax sp. (strain JS42).